Reading from the N-terminus, the 131-residue chain is Profilin-3 (131 aa).

The protein belongs to the profilin family. Occurs in many kinds of cells as a complex with monomeric actin in a 1:1 ratio.

It localises to the cytoplasm. Its subcellular location is the cytoskeleton. Its function is as follows. Binds to actin and affects the structure of the cytoskeleton. At high concentrations, profilin prevents the polymerization of actin, whereas it enhances it at low concentrations. By binding to PIP2, it inhibits the formation of IP3 and DG. The protein is Profilin-3 of Lilium longiflorum (Trumpet lily).